The primary structure comprises 209 residues: Cerebral peptide 1 (209 aa).

The first 20 residues, 1 to 20 (MLLAKISVVVLLLAIDGTSS), serve as a signal peptide directing secretion. The span at 21 to 39 (SESTDNVVLSSSPDSQKAA) shows a compositional bias: polar residues. Residues 21–43 (SESTDNVVLSSSPDSQKAATSRH) constitute a propeptide, connecting peptide 1. Positions 21–56 (SESTDNVVLSSSPDSQKAATSRHKRAPGWGKRSSLN) are disordered. Tryptophan 49 is modified (tryptophan amide). A propeptide spans 53-77 (SSLNDEDLFADSDSAQELLDSVAAL) (connecting peptide 2). 2 positions are modified to tryptophan amide: tryptophan 83 and tryptophan 105. Positions 98–169 (EAKRAPGWGK…APGWGKRSGG (72 aa)) are disordered. Positions 109–122 (GQEIDVDEDGSEQE) are cleaved as a propeptide — connecting peptide 4. 6 positions are modified to tryptophan amide: tryptophan 128, tryptophan 135, tryptophan 142, tryptophan 149, tryptophan 156, and tryptophan 163. Residues 167–191 (SGGDYCETLEKMVDAYIYKAVEVDS) constitute a propeptide, connecting peptide 5. The cysteines at positions 172 and 197 are disulfide-linked.

As to quaternary structure, homodimer; disulfide-linked. As to expression, cerebral peptide 1 is expressed in the cerebral, pedal and buccal ganglia and B1 and B2 neurons. APGW-amide is expressed in buccal ganglia and several neurons.

It localises to the secreted. May function as a peptide transmitter. In Aplysia californica (California sea hare), this protein is Cerebral peptide 1.